The chain runs to 523 residues: Calcium-dependent protein kinase 34 (523 aa).

The tract at residues 1–60 is disordered; sequence MGNCCSHGRDSDDNKEEPRPENGGGGVGAAEASVRASKHPPASPPPATKQGPIGPVLGRP. Residue Gly2 is the site of N-myristoyl glycine attachment. A compositionally biased stretch (basic and acidic residues) spans 7–20; that stretch reads HGRDSDDNKEEPRP. Residues 68 to 326 form the Protein kinase domain; sequence YTLGKELGRG…AAQVLNHPWI (259 aa). ATP is bound by residues 74 to 82 and Lys97; that span reads LGRGQFGVT. Asp192 functions as the Proton acceptor in the catalytic mechanism. A Phosphoserine modification is found at Ser232. Residues 332-362 are autoinhibitory domain; that stretch reads APDVPLDNAVMSRLKQFKAMNNFKKVALRVI. 4 consecutive EF-hand domains span residues 369-404, 405-440, 441-476, and 480-511; these read EEIM…QGTR, LSEY…INRL, DREE…FGMN, and DIKE…GNPD. 20 residues coordinate Ca(2+): Asp382, Asp384, Ser386, Thr388, Glu393, Asp418, Asp420, Asn422, Thr424, Glu429, Asp454, Asp456, Ser458, Tyr460, Glu465, Asp489, Asp491, Asp493, Arg495, and Glu500.

Belongs to the protein kinase superfamily. Ser/Thr protein kinase family. CDPK subfamily.

Its subcellular location is the membrane. The enzyme catalyses L-seryl-[protein] + ATP = O-phospho-L-seryl-[protein] + ADP + H(+). It catalyses the reaction L-threonyl-[protein] + ATP = O-phospho-L-threonyl-[protein] + ADP + H(+). Activated by calcium. Autophosphorylation may play an important role in the regulation of the kinase activity. Its function is as follows. May play a role in signal transduction pathways that involve calcium as a second messenger. This chain is Calcium-dependent protein kinase 34 (CPK34), found in Arabidopsis thaliana (Mouse-ear cress).